We begin with the raw amino-acid sequence, 309 residues long: Porphobilinogen deaminase (309 aa).

The residue at position 241 (C241) is an S-(dipyrrolylmethanemethyl)cysteine.

The protein belongs to the HMBS family. As to quaternary structure, monomer. Dipyrromethane is required as a cofactor.

The enzyme catalyses 4 porphobilinogen + H2O = hydroxymethylbilane + 4 NH4(+). Its pathway is porphyrin-containing compound metabolism; protoporphyrin-IX biosynthesis; coproporphyrinogen-III from 5-aminolevulinate: step 2/4. Functionally, tetrapolymerization of the monopyrrole PBG into the hydroxymethylbilane pre-uroporphyrinogen in several discrete steps. This Campylobacter concisus (strain 13826) protein is Porphobilinogen deaminase.